Here is a 769-residue protein sequence, read N- to C-terminus: Transferrin receptor protein 1 (769 aa).

The Cytoplasmic portion of the chain corresponds to 1–70 (MMDQARSAFS…KPKRFNGFIC (70 aa)). The mediates interaction with SH3BP4 stretch occupies residues 1–70 (MMDQARSAFS…KPKRFNGFIC (70 aa)). S10 and S19 each carry phosphoserine. At Y20 the chain carries Phosphotyrosine. Positions 20–23 (YTRF) match the Endocytosis signal motif. The residue at position 21 (T21) is a Phosphothreonine. At S24 the chain carries Phosphoserine. The Stop-transfer sequence motif lies at 61-64 (KPKR). C70 carries the S-palmitoyl cysteine lipid modification. The helical; Signal-anchor for type II membrane protein transmembrane segment at 71 to 91 (YGTIAIILFFLIGFMIGYLGY) threads the bilayer. Over 92–769 (CKRVEAKSEC…GDIWDIDNEF (678 aa)) the chain is Extracellular. A glycan (O-linked (GalNAc...) threonine) is linked at T107. The region spanning 232–322 (SKAATVTGRL…GTGDPYTPGF (91 aa)) is the PA domain. N-linked (GlcNAc...) asparagine glycans are attached at residues N260 and N326. The segment at 578-769 (TMDVYEKLIQ…GDIWDIDNEF (192 aa)) is ligand-binding. The short motif at 655 to 657 (RGD) is the Cell attachment site element. N731 and N736 each carry an N-linked (GlcNAc...) asparagine glycan.

The protein belongs to the peptidase M28 family. M28B subfamily. Homodimer; disulfide-linked. Binds one transferrin molecule per subunit. Interacts with SH3BP4. Homodimer; disulfide-linked. Binds one transferrin or HFE molecule per subunit. Binds the HLA class II histocompatibility antigen, DR1. Interacts with SH3BP3. Interacts with STEAP3; facilitates TFRC endocytosis in erythroid precursor cells. Stearoylated by ZDHHC6 which inhibits TFRC-mediated activation of the JNK pathway and promotes mitochondrial fragmentation. Stearoylation does not affect iron uptake. Post-translationally, N- and O-glycosylated, phosphorylated and palmitoylated.

The protein localises to the cell membrane. The protein resides in the melanosome. Its function is as follows. Cellular uptake of iron occurs via receptor-mediated endocytosis of ligand-occupied transferrin receptor into specialized endosomes. Endosomal acidification leads to iron release. The apotransferrin-receptor complex is then recycled to the cell surface with a return to neutral pH and the concomitant loss of affinity of apotransferrin for its receptor. Transferrin receptor is necessary for development of erythrocytes and the nervous system. Positively regulates T and B cell proliferation through iron uptake. Acts as a lipid sensor that regulates mitochondrial fusion by regulating activation of the JNK pathway. When dietary levels of stearate (C18:0) are low, promotes activation of the JNK pathway, resulting in HUWE1-mediated ubiquitination and subsequent degradation of the mitofusin MFN2 and inhibition of mitochondrial fusion. When dietary levels of stearate (C18:0) are high, TFRC stearoylation inhibits activation of the JNK pathway and thus degradation of the mitofusin MFN2. Mediates uptake of NICOL1 into fibroblasts where it may regulate extracellular matrix production. This chain is Transferrin receptor protein 1 (TFRC), found in Felis catus (Cat).